Reading from the N-terminus, the 365-residue chain is MSKPAVKSVPSATAKTATRAANPRQKAKAPKQAKPEGKGRAKPSKDKPRAEIKKALHPRNAHLNGYDFPALISAFPRLKTFVRPTPYGALSVNFADPLAVKTLNAALLKHHYGIGSWNIPEGALCPPIPGRVDYVHYVADLLAEGDKSCAMDKARVLDIGTGANGIYPILGCQVYGWQYVASDINAHSLANVQSIIEQNPVLQGRISLRLQPDDKAVFKGIIQAEERFELTLCNPPFHASMAEASEGTKRKVNNLQLNRGSSVKAAPKLNFGGQAAELWCQGGEGQFLATMIRESQMFADQCLWFTSLVSKQENLKPCYQALAQLNVDTVKTIEMQQGNKITRVLAWSFQSAAKRKLWRAEHLAR.

The disordered stretch occupies residues 1 to 50 (MSKPAVKSVPSATAKTATRAANPRQKAKAPKQAKPEGKGRAKPSKDKPRA). The span at 33–50 (AKPEGKGRAKPSKDKPRA) shows a compositional bias: basic and acidic residues.

This sequence belongs to the methyltransferase superfamily. METTL16/RlmF family.

It is found in the cytoplasm. The enzyme catalyses adenosine(1618) in 23S rRNA + S-adenosyl-L-methionine = N(6)-methyladenosine(1618) in 23S rRNA + S-adenosyl-L-homocysteine + H(+). Specifically methylates the adenine in position 1618 of 23S rRNA. The protein is Ribosomal RNA large subunit methyltransferase F of Shewanella baltica (strain OS195).